A 251-amino-acid polypeptide reads, in one-letter code: MAAPVVTMHQLIEAGAHFGHQTHRWNPRMKPYIFGARNGIHILDLSQTVPLMARALEFISATVQAGGKVLFVGTKRQAQEPIAQAARASGQHYVNHRWLGGMLTNWKTISGSIKRFKALEEQLAGDTAGLTKKEVLQLTRERDKFELSLGGIRDMGGIPDVMFVIDANKEELAIKEANVLGIPVVAILDSNVSPEGIAFPIPANDDASRAIRLYCEAVAAAATKGGRDAALASGADLGAMAEPLAEEAAEV.

This sequence belongs to the universal ribosomal protein uS2 family.

This Novosphingobium aromaticivorans (strain ATCC 700278 / DSM 12444 / CCUG 56034 / CIP 105152 / NBRC 16084 / F199) protein is Small ribosomal subunit protein uS2.